The chain runs to 308 residues: ATP synthase gamma chain (308 aa).

The protein belongs to the ATPase gamma chain family. In terms of assembly, F-type ATPases have 2 components, CF(1) - the catalytic core - and CF(0) - the membrane proton channel. CF(1) has five subunits: alpha(3), beta(3), gamma(1), delta(1), epsilon(1). CF(0) has three main subunits: a, b and c.

The protein resides in the cell inner membrane. In terms of biological role, produces ATP from ADP in the presence of a proton gradient across the membrane. The gamma chain is believed to be important in regulating ATPase activity and the flow of protons through the CF(0) complex. The protein is ATP synthase gamma chain of Salinibacter ruber (strain DSM 13855 / M31).